The chain runs to 704 residues: Fatty acid oxidation complex subunit alpha (704 aa).

The tract at residues 1–190 is enoyl-CoA hydratase; it reads MSEQKAFSLK…KLGVVDACVP (190 aa). Residues 308–704 are 3-hydroxyacyl-CoA dehydrogenase; the sequence is TAVNKVGVLG…RAGEGRNFYD (397 aa).

This sequence in the N-terminal section; belongs to the enoyl-CoA hydratase/isomerase family. The protein in the central section; belongs to the 3-hydroxyacyl-CoA dehydrogenase family. Heterotetramer of two alpha chains (FadJ) and two beta chains (FadI).

The protein resides in the cytoplasm. It carries out the reaction a (3S)-3-hydroxyacyl-CoA = a (2E)-enoyl-CoA + H2O. The catalysed reaction is a 4-saturated-(3S)-3-hydroxyacyl-CoA = a (3E)-enoyl-CoA + H2O. The enzyme catalyses a (3S)-3-hydroxyacyl-CoA + NAD(+) = a 3-oxoacyl-CoA + NADH + H(+). It catalyses the reaction (3S)-3-hydroxybutanoyl-CoA = (3R)-3-hydroxybutanoyl-CoA. It functions in the pathway lipid metabolism; fatty acid beta-oxidation. Catalyzes the formation of a hydroxyacyl-CoA by addition of water on enoyl-CoA. Also exhibits 3-hydroxyacyl-CoA epimerase and 3-hydroxyacyl-CoA dehydrogenase activities. This chain is Fatty acid oxidation complex subunit alpha, found in Vibrio campbellii (strain ATCC BAA-1116).